The sequence spans 377 residues: Actin-related protein T2 (377 aa).

Belongs to the actin family.

It is found in the cytoplasm. The protein localises to the cytoskeleton. The protein is Actin-related protein T2 (Actrt2) of Mus musculus (Mouse).